The chain runs to 208 residues: FMN-dependent NADH:quinone oxidoreductase (208 aa).

FMN is bound by residues Ser-10, 16-18 (SVS), 94-97 (MYNF), and 138-141 (SRGG).

Belongs to the azoreductase type 1 family. Homodimer. FMN serves as cofactor.

It carries out the reaction 2 a quinone + NADH + H(+) = 2 a 1,4-benzosemiquinone + NAD(+). It catalyses the reaction N,N-dimethyl-1,4-phenylenediamine + anthranilate + 2 NAD(+) = 2-(4-dimethylaminophenyl)diazenylbenzoate + 2 NADH + 2 H(+). In terms of biological role, quinone reductase that provides resistance to thiol-specific stress caused by electrophilic quinones. Functionally, also exhibits azoreductase activity. Catalyzes the reductive cleavage of the azo bond in aromatic azo compounds to the corresponding amines. The protein is FMN-dependent NADH:quinone oxidoreductase of Hyphomonas neptunium (strain ATCC 15444).